A 206-amino-acid polypeptide reads, in one-letter code: Tumor protein D54 (206 aa).

N-acetylmethionine is present on Met-1. A compositionally biased stretch (polar residues) spans 1–14 (MDSAGQDINLNSPN). A disordered region spans residues 1–24 (MDSAGQDINLNSPNKGLLSDSMTD). Residues Ser-3, Ser-12, Ser-19, and Ser-21 each carry the phosphoserine modification. Residues 38–82 (VEGLTEAEEEELRAELTKVEEEIVTLRQVLAAKERHCGELKRRLG) adopt a coiled-coil conformation. Ser-96, Ser-149, and Ser-161 each carry phosphoserine. Position 163 is a phosphothreonine (Thr-163). Phosphoserine is present on Ser-166. Thr-173 is modified (phosphothreonine). Positions 175–185 (KSKVVGDRENG) are enriched in basic and acidic residues. Residues 175–206 (KSKVVGDRENGSDNLPSSAGSGDKPLSDPAPF) form a disordered region. Ser-192 and Ser-195 each carry phosphoserine.

This sequence belongs to the TPD52 family. Forms a homodimer or heterodimer with other members of the family. Interacts with MAL2.

The polypeptide is Tumor protein D54 (TPD52L2) (Homo sapiens (Human)).